The chain runs to 256 residues: Thiazole synthase (256 aa).

Lys95 serves as the catalytic Schiff-base intermediate with DXP. 1-deoxy-D-xylulose 5-phosphate contacts are provided by residues Gly156, 182-183 (AG), and 204-205 (NT).

Belongs to the ThiG family. Homotetramer. Forms heterodimers with either ThiH or ThiS.

The protein resides in the cytoplasm. The catalysed reaction is [ThiS sulfur-carrier protein]-C-terminal-Gly-aminoethanethioate + 2-iminoacetate + 1-deoxy-D-xylulose 5-phosphate = [ThiS sulfur-carrier protein]-C-terminal Gly-Gly + 2-[(2R,5Z)-2-carboxy-4-methylthiazol-5(2H)-ylidene]ethyl phosphate + 2 H2O + H(+). Its pathway is cofactor biosynthesis; thiamine diphosphate biosynthesis. In terms of biological role, catalyzes the rearrangement of 1-deoxy-D-xylulose 5-phosphate (DXP) to produce the thiazole phosphate moiety of thiamine. Sulfur is provided by the thiocarboxylate moiety of the carrier protein ThiS. In vitro, sulfur can be provided by H(2)S. The sequence is that of Thiazole synthase from Shigella dysenteriae serotype 1 (strain Sd197).